The primary structure comprises 1316 residues: MLDVNFFDELRIGLATAEDIRQWSYGEVKKPETINYRTLKPEKDGLFCEKIFGPTRDWECYCGKYKRVRFKGIICERCGVEVTRAKVRRERMGHIELAAPVTHIWYFKGVPSRLGYLLDLAPKDLEKIIYFAAYVITTVDEEMRHNELSTLEAEMMVERKSVEDQRDADLEARAQKLEADLAALEAEGAKADARRKFRDGGEREMRQLRERAQRELDRLEDIWSTFTKLAPKQLIVDENLYRELVDRYGEYFTGAMGAESIQKLMQDFDIEAEAESLREVIRNGKGQKKLRALKRLKVVAAFQQSGNSPMGMVLDAVPVIPPELRPMVQLDGGRFATSDLNDLYRRVINRNNRLKRLIDLGAPDIIVNNEKRMLQESVDALFDNGRRGRPVTGPGNRPLKSLSDLLKGKQGRFRQNLLGKRVDYSGRSVIVVGPQLKLHQCGLPKLMALELFKPFVMKRLVDLNHAQNIKSAKRMVERQRPQVWDVLEEVIAEHPVLLNRAPTLHRLGIQAFEPMLVEGKAIQLHPLVCEAFNADFDGDQMAVHLPLSAEAQAEARILMLSSNNILSPASGRPLAMPRLDMVTGLYYLTTAVDGDTGAYRPAAEDRPESGVYSSPAEAIMAADRGVLSVRAKIKVQLTQVRPPADIEARWFGANGWRPGDPWIADTTLGRVMFNELLPLGYPFVNKQMHKKVQAAIINDLAERYPMIVVAQTVDKLKDAGFYWATRSGVTVSMADVLVPPRKKEILDHYEERADKVEKQFQRGALNHDERNEALVEIWKEATDEVGQALRDHYPVDNPIITIVDSGATGNFTQTRALAGMKGLVTNPKGEFIPRPVKSSFREGLTVLEYFINTHGARKGLADTALRTADSGYLTRRLVDVSQDVIVREHDCQTERGIVVELAVRVPDGSLIRELYIETSAYARTLGANAVDEAGNVIVARGEDLGDPEIDALLAAGITQVKVRSVLTCTTGTGVCATCYGRSMATGKLVDIGEAVGIVAAQSIGEPGTQLTMRTFHQGGVGEDITGGLPRVQELFEARVPRGKAPIADVTGRVRLEDGERFYKITIVPDDGGEEVVYDKLSKRQRLRVFKHADGSERVLSDGDYVEVGQQLMEGSADPHEVLRVQGPREVQIHLVREVQEVYRAQGVSIHDKHIEVIVRQMLRRVTIIDSGSTEFLPGSLIDRAEFESENRRVVAESGEPAAGRPVLMGITKASLATDSWLSAASFQETTRVLTDAAINCRSDKLNGLKENVIIGKLIPAGTGINRYRNIQVQPTEEARASAYTIPSYEDQYYSPDFGQATGAAVPLDDYGYSDYR.

4 residues coordinate Zn(2+): C60, C62, C75, and C78. D535, D537, and D539 together coordinate Mg(2+). Zn(2+) is bound by residues C891, C968, C975, and C978.

This sequence belongs to the RNA polymerase beta' chain family. As to quaternary structure, the RNAP catalytic core consists of 2 alpha, 1 beta, 1 beta' and 1 omega subunit. When a sigma factor is associated with the core the holoenzyme is formed, which can initiate transcription. Requires Mg(2+) as cofactor. The cofactor is Zn(2+).

It catalyses the reaction RNA(n) + a ribonucleoside 5'-triphosphate = RNA(n+1) + diphosphate. In terms of biological role, DNA-dependent RNA polymerase catalyzes the transcription of DNA into RNA using the four ribonucleoside triphosphates as substrates. The chain is DNA-directed RNA polymerase subunit beta' from Mycobacterium leprae (strain Br4923).